A 73-amino-acid chain; its full sequence is Large ribosomal subunit protein eL20 (73 aa).

This sequence belongs to the eukaryotic ribosomal protein eL20 family. Part of the 50S ribosomal subunit. Binds 23S rRNA.

This Methanococcus aeolicus (strain ATCC BAA-1280 / DSM 17508 / OCM 812 / Nankai-3) protein is Large ribosomal subunit protein eL20.